The sequence spans 137 residues: Small ribosomal subunit protein uS19 (137 aa).

The disordered stretch occupies residues 115–137; that stretch reads RNRVSHGSAGVGATRSSKFVPLK.

Belongs to the universal ribosomal protein uS19 family.

Its function is as follows. Protein S19 forms a complex with S13 that binds strongly to the 16S ribosomal RNA. In Methanococcoides burtonii (strain DSM 6242 / NBRC 107633 / OCM 468 / ACE-M), this protein is Small ribosomal subunit protein uS19.